A 257-amino-acid polypeptide reads, in one-letter code: Phosphonates import ATP-binding protein PhnC (257 aa).

One can recognise an ABC transporter domain in the interval 4–248 (IEFKDVSKVY…VFNHIYGRSI (245 aa)).

The protein belongs to the ABC transporter superfamily. Phosphonates importer (TC 3.A.1.9.1) family. In terms of assembly, the complex is composed of two ATP-binding proteins (PhnC), two transmembrane proteins (PhnE) and a solute-binding protein (PhnD).

The protein localises to the cell membrane. It catalyses the reaction phosphonate(out) + ATP + H2O = phosphonate(in) + ADP + phosphate + H(+). Functionally, part of the ABC transporter complex PhnCDE involved in phosphonates import. Responsible for energy coupling to the transport system. The protein is Phosphonates import ATP-binding protein PhnC of Staphylococcus epidermidis (strain ATCC 35984 / DSM 28319 / BCRC 17069 / CCUG 31568 / BM 3577 / RP62A).